Consider the following 276-residue polypeptide: Cruxhalorhodopsin-3 (276 aa).

Residues 1–21 constitute a propeptide that is removed on maturation; it reads MPAASTAATTLLQASQSEVLG. Residues 22–25 are Extracellular-facing; the sequence is EIQS. The chain crosses the membrane as a helical span at residues 26 to 51; the sequence is NFLLNSSLWVNIALAGVVILLFVAMG. Topologically, residues 52-57 are cytoplasmic; the sequence is RELESS. The chain crosses the membrane as a helical span at residues 58-81; it reads RAKLIWVATMLVPLVSISSYAGLA. Residues 82-105 lie on the Extracellular side of the membrane; it reads SGLTVGFLQMPPGHALAGQEVLSP. The helical transmembrane segment at 106-127 threads the bilayer; it reads WGRYLTWTFSTPMILLALGLLA. Over 128–130 the chain is Cytoplasmic; the sequence is DTD. The chain crosses the membrane as a helical span at residues 131 to 154; that stretch reads MASLFTAITMDIGMCITGLAAALV. The Extracellular portion of the chain corresponds to 155 to 157; the sequence is TSS. Residues 158 to 180 form a helical membrane-spanning segment; sequence HLLRWVFYGISCAFFIAVLYVLL. The Cytoplasmic segment spans residues 181–192; that stretch reads VEWPADAEAAGT. Residues 193–216 form a helical membrane-spanning segment; the sequence is SEIFGTLKLLTVVLWLGYPILWAL. The Extracellular portion of the chain corresponds to 217–225; that stretch reads GSEGVALLS. The chain crosses the membrane as a helical span at residues 226–254; the sequence is VGVTSWGYSGLDILAKYVFAFLLLRWVAA. At Lys-241 the chain carries N6-(retinylidene)lysine. The Cytoplasmic segment spans residues 255–276; the sequence is NEDTVTQAGMSLGSGGAAPADD.

This sequence belongs to the archaeal/bacterial/fungal opsin family.

Its subcellular location is the cell membrane. Functionally, light-driven chloride pump. This chain is Cruxhalorhodopsin-3 (choP3), found in Haloarcula vallismortis (Halobacterium vallismortis).